Reading from the N-terminus, the 699-residue chain is Endogenous retrovirus group K member 113 Env polyprotein (699 aa).

The segment at 1 to 47 (MNPSEMQRKAPPRRRRHRNRAPLTHKMNKMVTSEEQMKLPSTKKAEP) is disordered. The N-terminal stretch at 1–89 (MNPSEMQRKA…ALMIVSMVVS (89 aa)) is a signal peptide. A compositionally biased stretch (basic residues) spans 10 to 20 (APPRRRRHRNR). The Extracellular segment spans residues 90–632 (LPMPAGAAAA…NLNPVTWVKT (543 aa)). N-linked (GlcNAc...) asparagine glycans are attached at residues Asn100, Asn128, Asn153, Asn274, Asn355, Asn372, and Asn461. The segment at 466-486 (FIFTLIAVIMGLIAVTATAAV) is fusion peptide. Residues Asn507, Asn554, Asn566, and Asn585 are each glycosylated (N-linked (GlcNAc...) asparagine). The chain crosses the membrane as a helical span at residues 633–653 (IGSTTIINLILILVCLFCLLL). Topologically, residues 654 to 699 (VCRCTQQLRRDSDHRERAMMTMAVLSKRKGGNVGKSKRDQIVTVSV) are cytoplasmic.

This sequence belongs to the beta type-B retroviral envelope protein family. HERV class-II K(HML-2) env subfamily. In terms of assembly, the surface (SU) and transmembrane (TM) proteins form a heterodimer. SU and TM are attached by noncovalent interactions or by a labile interchain disulfide bond. Post-translationally, specific enzymatic cleavages in vivo yield the mature SU and TM proteins.

It is found in the cell membrane. Its subcellular location is the virion. Functionally, retroviral envelope proteins mediate receptor recognition and membrane fusion during early infection. Endogenous envelope proteins may have kept, lost or modified their original function during evolution. This endogenous envelope protein has lost its original fusogenic properties. Its function is as follows. SU mediates receptor recognition. In terms of biological role, TM anchors the envelope heterodimer to the viral membrane through one transmembrane domain. The other hydrophobic domain, called fusion peptide, mediates fusion of the viral membrane with the target cell membrane. This chain is Endogenous retrovirus group K member 113 Env polyprotein (HERVK_113), found in Homo sapiens (Human).